Reading from the N-terminus, the 294-residue chain is 4-hydroxy-tetrahydrodipicolinate synthase (294 aa).

T47 provides a ligand contact to pyruvate. The active-site Proton donor/acceptor is the Y135. Residue K163 is the Schiff-base intermediate with substrate of the active site. A pyruvate-binding site is contributed by T205.

Belongs to the DapA family. In terms of assembly, homotetramer; dimer of dimers.

It is found in the cytoplasm. The enzyme catalyses L-aspartate 4-semialdehyde + pyruvate = (2S,4S)-4-hydroxy-2,3,4,5-tetrahydrodipicolinate + H2O + H(+). The protein operates within amino-acid biosynthesis; L-lysine biosynthesis via DAP pathway; (S)-tetrahydrodipicolinate from L-aspartate: step 3/4. Catalyzes the condensation of (S)-aspartate-beta-semialdehyde [(S)-ASA] and pyruvate to 4-hydroxy-tetrahydrodipicolinate (HTPA). The protein is 4-hydroxy-tetrahydrodipicolinate synthase of Rickettsia africae (strain ESF-5).